The chain runs to 453 residues: Pup--protein ligase (453 aa).

Glu-9 contributes to the Mg(2+) binding site. Arg-53 contacts ATP. Residue Tyr-55 participates in Mg(2+) binding. Catalysis depends on Asp-57, which acts as the Proton acceptor. Glu-63 serves as a coordination point for Mg(2+). Residues Thr-66 and Trp-420 each coordinate ATP.

The protein belongs to the Pup ligase/Pup deamidase family. Pup-conjugating enzyme subfamily.

It catalyses the reaction ATP + [prokaryotic ubiquitin-like protein]-L-glutamate + [protein]-L-lysine = ADP + phosphate + N(6)-([prokaryotic ubiquitin-like protein]-gamma-L-glutamyl)-[protein]-L-lysine.. It functions in the pathway protein degradation; proteasomal Pup-dependent pathway. It participates in protein modification; protein pupylation. Its function is as follows. Catalyzes the covalent attachment of the prokaryotic ubiquitin-like protein modifier Pup to the proteasomal substrate proteins, thereby targeting them for proteasomal degradation. This tagging system is termed pupylation. The ligation reaction involves the side-chain carboxylate of the C-terminal glutamate of Pup and the side-chain amino group of a substrate lysine. This is Pup--protein ligase from Streptomyces coelicolor (strain ATCC BAA-471 / A3(2) / M145).